A 150-amino-acid polypeptide reads, in one-letter code: D-aminoacyl-tRNA deacylase (150 aa).

The Gly-cisPro motif, important for rejection of L-amino acids motif lies at 138–139 (GP).

This sequence belongs to the DTD family. Homodimer.

The protein resides in the cytoplasm. It carries out the reaction glycyl-tRNA(Ala) + H2O = tRNA(Ala) + glycine + H(+). It catalyses the reaction a D-aminoacyl-tRNA + H2O = a tRNA + a D-alpha-amino acid + H(+). Functionally, an aminoacyl-tRNA editing enzyme that deacylates mischarged D-aminoacyl-tRNAs. Also deacylates mischarged glycyl-tRNA(Ala), protecting cells against glycine mischarging by AlaRS. Acts via tRNA-based rather than protein-based catalysis; rejects L-amino acids rather than detecting D-amino acids in the active site. By recycling D-aminoacyl-tRNA to D-amino acids and free tRNA molecules, this enzyme counteracts the toxicity associated with the formation of D-aminoacyl-tRNA entities in vivo and helps enforce protein L-homochirality. This is D-aminoacyl-tRNA deacylase from Petrotoga mobilis (strain DSM 10674 / SJ95).